The sequence spans 166 residues: MALRLEDKKAIVAEVNEAAKGALSAVAADSRGVTVGAMTGLRKKAREAGVYVRVVRNTLARRAVEGTAFECLAETFTGPTLIAFSLEHPGAAARLLKDFAKEQANFEVKGAAFEGNFIPAAEIDRLAKLPTYEEALAQLMMTMKEASAGKFVRTLAALRDQKQEAA.

It belongs to the universal ribosomal protein uL10 family. As to quaternary structure, part of the ribosomal stalk of the 50S ribosomal subunit. The N-terminus interacts with L11 and the large rRNA to form the base of the stalk. The C-terminus forms an elongated spine to which L12 dimers bind in a sequential fashion forming a multimeric L10(L12)X complex.

In terms of biological role, forms part of the ribosomal stalk, playing a central role in the interaction of the ribosome with GTP-bound translation factors. The chain is Large ribosomal subunit protein uL10 from Shewanella baltica (strain OS223).